Reading from the N-terminus, the 900-residue chain is Phospholipase DDHD1 (900 aa).

Disordered stretches follow at residues methionine 1 to serine 28, leucine 100 to alanine 152, and glycine 202 to arginine 233. A phosphoserine mark is found at serine 8 and serine 11. The segment covering serine 130–proline 140 has biased composition (gly residues). Serine 537 is an active-site residue. The 276-residue stretch at leucine 611–lysine 886 folds into the DDHD domain. Disordered stretches follow at residues alanine 706–valine 725 and serine 768–leucine 801. Polar residues predominate over residues threonine 710–valine 725. Serine 723 carries the post-translational modification Phosphoserine. Basic and acidic residues predominate over residues threonine 776–proline 787. The span at proline 791–leucine 801 shows a compositional bias: polar residues.

The protein belongs to the PA-PLA1 family. Forms homooligomers and, to a much smaller extent, heterooligomers with DDHD2. In terms of tissue distribution, highly expressed in testis. Also expressed in brain, spleen and lung. Only expressed in cerebellum in fetal brain.

Its subcellular location is the cytoplasm. The catalysed reaction is a 1,2-diacyl-sn-glycero-3-phosphate + H2O = a 2-acyl-sn-glycerol 3-phosphate + a fatty acid + H(+). The enzyme catalyses a 1,2-diacyl-sn-glycero-3-phospho-(1D-myo-inositol) + H2O = a 2-acyl-sn-glycero-3-phospho-D-myo-inositol + a fatty acid + H(+). It carries out the reaction 1-octadecanoyl-2-(5Z,8Z,11Z,14Z-eicosatetraenoyl)-sn-glycero-3-phospho-(1D-myo-inositol) + H2O = 2-(5Z,8Z,11Z,14Z-eicosatetraenoyl)-sn-glycero-3-phospho-(1D-myo-inositol) + octadecanoate + H(+). It catalyses the reaction a 1-acyl-2-(5Z,8Z,11Z,14Z-eicosatetraenoyl)-sn-glycero-3-phospho-(1D-myo-inositol) + H2O = 2-(5Z,8Z,11Z,14Z-eicosatetraenoyl)-sn-glycero-3-phospho-(1D-myo-inositol) + a fatty acid + H(+). The catalysed reaction is 1,2-dihexadecanoyl-sn-glycero-3-phospho-(1D-myo-inositol) + H2O = 2-hexadecanoyl-sn-glycero-3-phospho-(1D-myo-inositol) + hexadecanoate + H(+). The enzyme catalyses a 1-acyl-2-(5Z,8Z,11Z,14Z)-eicosatetraenoyl-sn-glycero-3-phosphate + H2O = 2-(5Z,8Z,11Z,14Z-eicosatetraenoyl)-sn-glycero-3-phosphate + a fatty acid + H(+). It carries out the reaction 1,2-di-(9Z-octadecenoyl)-sn-glycero-3-phosphate + H2O = 2-(9Z-octadecenoyl)-sn-glycero-3-phosphate + (9Z)-octadecenoate + H(+). It catalyses the reaction 1-hexadecanoyl-2-(9Z-octadecenoyl)-sn-glycero-3-phosphate + H2O = 2-(9Z-octadecenoyl)-sn-glycero-3-phosphate + hexadecanoate + H(+). The catalysed reaction is 1-hexadecanoyl-2-(9Z-octadecenoyl)-sn-glycero-3-phospho-L-serine + H2O = 2-(9Z-octadecenoyl)-sn-glycero-3-phospho-L-serine + hexadecanoate + H(+). The enzyme catalyses 1,2-di-(5Z,8Z,11Z,14Z)-eicosatetraenoyl-sn-glycero-3-phosphate + H2O = 2-(5Z,8Z,11Z,14Z-eicosatetraenoyl)-sn-glycero-3-phosphate + (5Z,8Z,11Z,14Z)-eicosatetraenoate + H(+). It carries out the reaction 1-octadecanoyl-2-(5Z,8Z,11Z,14Z-eicosatetraenoyl)-sn-glycero-3-phosphate + H2O = 2-(5Z,8Z,11Z,14Z-eicosatetraenoyl)-sn-glycero-3-phosphate + octadecanoate + H(+). It catalyses the reaction a 1,2-diacyl-sn-glycero-3-phosphocholine + H2O = a 2-acyl-sn-glycero-3-phosphocholine + a fatty acid + H(+). The catalysed reaction is a 1,2-diacyl-sn-glycero-3-phosphoethanolamine + H2O = a 2-acyl-sn-glycero-3-phosphoethanolamine + a fatty acid + H(+). The enzyme catalyses a 1,2-diacyl-sn-glycero-3-phospho-L-serine + H2O = a 2-acyl-sn-glycero-3-phospho-L-serine + a fatty acid + H(+). It carries out the reaction a 1,2-diacyl-sn-glycero-3-phospho-(1'-sn-glycerol) + H2O = 2-acyl-sn-glycero-3-phospho-(1'-sn-glycerol) + a fatty acid + H(+). It catalyses the reaction 1-hexadecanoyl-2-(9Z-octadecenoyl)-sn-glycero-3-phospho-(1'-sn-glycerol) + H2O = 2-(9Z-octadecenoyl)-sn-glycero-3-phospho-(1'-sn-glycerol) + hexadecanoate + H(+). The catalysed reaction is 1-acyl-2-(5Z,8Z,11Z,14Z-eicosatetraenoyl)-sn-glycero-3-phosphocholine + H2O = 2-(5Z,8Z,11Z,14Z)-eicosatetraenoyl-sn-glycero-3-phosphocholine + a fatty acid + H(+). The enzyme catalyses 1-acyl-2-(5Z,8Z,11Z,14Z)-eicosatetraenoyl-sn-glycero-3-phosphoethanolamine + H2O = 2-(5Z,8Z,11Z,14Z)-eicosatetraenoyl-sn-glycero-3-phosphoethanolamine + a fatty acid + H(+). It carries out the reaction 1-(9Z-octadecenoyl)-2-(7Z,10Z,13Z,16Z,19Z-docosapentaenoyl)-sn-glycero-3-phospho-1D-myo-inositol + H2O = 2-(7Z,10Z,13Z,16Z,19Z-docosapentaenoyl)-sn-glycero-3-phospho-1D-myo-inositol + (9Z)-octadecenoate + H(+). It catalyses the reaction 1-(9Z-octadecenoyl)-2-(5Z,8Z,11Z,14Z-eicosatetraenoyl)-sn-glycero-3-phospho-1D-myo-inositol + H2O = 2-(5Z,8Z,11Z,14Z-eicosatetraenoyl)-sn-glycero-3-phospho-(1D-myo-inositol) + (9Z)-octadecenoate + H(+). The catalysed reaction is 1,2-di-(9Z-octadecenoyl)-sn-glycero-3-phospho-1D-myo-inositol + H2O = 2-(9Z-octadecenoyl)-sn-glycero-3-phospho-1D-myo-inositol + (9Z)-octadecenoate + H(+). The enzyme catalyses 1-(9Z-octadecenoyl)-2-(8Z,11Z,14Z-eicosatrienoyl)-sn-glycero-3-phospho-1D-myo-inositol + H2O = 2-(8Z,11Z,14Z-eicosatrienoyl)-sn-glycero-3-phospho-1D-myo-inositol + (9Z)-octadecenoate + H(+). It carries out the reaction 1,2-di-(9Z-octadecenoyl)-sn-glycero-3-phosphocholine + H2O = (9Z-octadecenoyl)-sn-glycero-3-phosphocholine + (9Z)-octadecenoate + H(+). It functions in the pathway phospholipid metabolism; phosphatidylinositol metabolism. Its activity is regulated as follows. Phosphatidate (1,2-diacyl-sn-glycero-3-phosphate, PA) can positively regulate phospholipase A1 activity. In terms of biological role, phospholipase A1 (PLA1) that hydrolyzes ester bonds at the sn-1 position of glycerophospholipids producing a free fatty acid and a lysophospholipid. Prefers phosphatidate (1,2-diacyl-sn-glycero-3-phosphate, PA) as substrate in vitro, but can efficiently hydrolyze phosphatidylinositol (1,2-diacyl-sn-glycero-3-phospho-(1D-myo-inositol), PI), as well as a range of other glycerophospholipid substrates such as phosphatidylcholine (1,2-diacyl-sn-glycero-3-phosphocholine, PC), phosphatidylethanolamine (1,2-diacyl-sn-glycero-3-phosphoethanolamine, PE), phosphatidylserine (1,2-diacyl-sn-glycero-3-phospho-L-serine, PS) and phosphatidylglycerol (1,2-diacyl-sn-glycero-3-phospho-(1'-sn-glycerol), PG). Involved in the regulation of the endogenous content of polyunsaturated PI and PS lipids in the nervous system. Changes in these lipids extend to downstream metabolic products like PI phosphates PIP and PIP2, which play fundamental roles in cell biology. Regulates mitochondrial morphology. These dynamic changes may be due to PA hydrolysis at the mitochondrial surface. May play a regulatory role in spermatogenesis or sperm function. The chain is Phospholipase DDHD1 from Homo sapiens (Human).